Here is a 790-residue protein sequence, read N- to C-terminus: Chorion peroxidase (790 aa).

The signal sequence occupies residues 1 to 16; the sequence is MAKKVLLLSLYSAVLS. A propeptide spanning residues 17-209 is cleaved from the precursor; the sequence is TWFGFGYVQC…ARIPRAIRKR (193 aa). Cys210 bears the N-acetylcysteine; in Chorion peroxidase light chain mark. Residues Cys216 and Cys229 are joined by a disulfide bond. Trp259 carries an N-linked (Man) tryptophan glycan. Residue His305 is the Proton acceptor of the active site. N-linked (GlcNAc...) asparagine glycosylation is present at Asn327. Tyr353 is subject to 3',4'-dihydroxyphenylalanine. The cysteines at positions 433 and 440 are disulfide-linked. The N-linked (Man) tryptophan glycan is linked to Trp479. His551 serves as a coordination point for heme b. N-linked (Man) tryptophan glycosylation is present at Trp680. A disulfide bridge connects residues Cys746 and Cys774. Trp785 carries an N-linked (Man) tryptophan glycan.

Belongs to the peroxidase family. XPO subfamily. As to quaternary structure, heterodimer. The cofactor is heme b. N-glycosylated on Trp by mannose and on Asn by N-acetylglucosamine. In terms of processing, there is a hexose glycosylation of an unidentified residue between 654 and 708; Trp-680 is conserved in closely related species and is probably mannosylated.

The protein localises to the secreted. It catalyses the reaction 2 a phenolic donor + H2O2 = 2 a phenolic radical donor + 2 H2O. With respect to regulation, extremely resistant to denaturating agents, such as SDS and organic solvents. In terms of biological role, involved in the formation of a rigid and insoluble egg chorion by catalyzing chorion protein cross-linking through dityrosine formation and phenol oxidase-catalyzed chorion melanization. The polypeptide is Chorion peroxidase (pxt) (Aedes aegypti (Yellowfever mosquito)).